Reading from the N-terminus, the 241-residue chain is 2-C-methyl-D-erythritol 4-phosphate cytidylyltransferase (241 aa).

It belongs to the IspD/TarI cytidylyltransferase family. IspD subfamily. Homodimer.

The enzyme catalyses 2-C-methyl-D-erythritol 4-phosphate + CTP + H(+) = 4-CDP-2-C-methyl-D-erythritol + diphosphate. Its pathway is isoprenoid biosynthesis; isopentenyl diphosphate biosynthesis via DXP pathway; isopentenyl diphosphate from 1-deoxy-D-xylulose 5-phosphate: step 2/6. In terms of biological role, catalyzes the formation of 4-diphosphocytidyl-2-C-methyl-D-erythritol from CTP and 2-C-methyl-D-erythritol 4-phosphate (MEP). This chain is 2-C-methyl-D-erythritol 4-phosphate cytidylyltransferase, found in Yersinia pestis.